The following is a 370-amino-acid chain: MKIEAIDVTLVDVPASRPIQMSFTTVQKQSYAIVQIRAGGLVGIGEGSSVGGPTWSSECAETIKVIIETYLAPLLIGKDATNLRELQHLMERAVTGNYSAKAAIDVALHDLKARSLNLPLSDLIGGAIQQGIPIAWTLASGDTQRDIAIAEEMIERRRHNRFKIKLGVRSPADDLRHIEKIIERVGDRAAVRVDINQAWDENTASVWIPRLEAAGVELVEQPVARSNFDALRRLSADNGVAILADESLSSLASAFELARHHCVDAFSLKLCNMGGVANTLKVAAIAEASGIASYGGTMLDSSIGTAAALHVYATLPTMPFECELLGPWVLADTLTQTQLEIKDFEIRLPSGPGLGVDIDPDKLRHFTRAG.

The active-site Proton acceptor is the K165. Mn(2+) contacts are provided by D194, E220, and D245. E323 functions as the Proton donor in the catalytic mechanism.

Belongs to the mandelate racemase/muconate lactonizing enzyme family. Requires Mn(2+) as cofactor.

The enzyme catalyses 2-[(2R)-2-chloro-2,5-dihydro-5-oxofuryl]acetate = 3-chloro-cis,cis-muconate + H(+). It participates in aromatic compound metabolism; 3-chlorocatechol degradation. In terms of biological role, highly active toward chlorinated substrates but retains diminished activity toward the non-chlorinated substrates. The sequence is that of Chloromuconate cycloisomerase (clcB) from Pseudomonas putida (Arthrobacter siderocapsulatus).